A 58-amino-acid polypeptide reads, in one-letter code: Preprotein translocase subunit SecG (58 aa).

The Cytoplasmic segment spans residues M1–P32. Residues P33–L54 form a helical membrane-spanning segment. Residues K55–R58 are Extracellular-facing.

It belongs to the SEC61-beta family. Component of the protein translocase complex. Heterotrimer consisting of alpha (SecY), beta (SecG) and gamma (SecE) subunits. Can form oligomers of the heterotrimer.

The protein localises to the cell membrane. Functionally, involved in protein export. The function of the beta subunit is unknown, but it may be involved in stabilization of the trimeric complex. This is Preprotein translocase subunit SecG from Ignicoccus hospitalis (strain KIN4/I / DSM 18386 / JCM 14125).